The chain runs to 89 residues: MSSRISVSLLLLAVVATMFFTANVVDATPRSQGNMMRYGNSLPAYAPHVLYRFYNSRQFAPINKRNNAEVVNHILKNFGALDRLGDVGK.

An N-terminal signal peptide occupies residues 1–27 (MSSRISVSLLLLAVVATMFFTANVVDA).

Functionally, probable ligand of isoforms a and b of the calcitonin receptor-like protein, pdfr-1, a G-protein coupled receptor. May not signal through isoform c of pdfr-1. Involved in locomotion; may play a role in circadian rhythms of locomotor activity. Modulator of egg-laying. In Caenorhabditis elegans, this protein is Pigment dispersing factor homolog pdf-2.